Consider the following 479-residue polypeptide: PTS system sucrose-specific EIIBC component (479 aa).

The PTS EIIB type-1 domain maps to 4 to 87 (PAVAKELLTL…AKLTGMSEMS (84 aa)). The active-site Phosphocysteine intermediate; for EIIB activity is C26. 11 consecutive transmembrane segments (helical) span residues 112–132 (IFVP…IYNL), 158–178 (MINT…AFSA), 182–202 (FGGN…PDLL), 204–224 (GWGF…ILGF), 232–252 (QGSV…ELGL), 264–284 (LTPL…VGPF), 303–323 (AGFV…ITGM), 345–365 (FIFP…LAVG), 376–396 (IAIP…MFGV), 403–423 (PFIA…MFNV), and 448–468 (IAGM…LGIG). The region spanning 120-477 (IVAGGLLMGI…GDRAKVGKKA (358 aa)) is the PTS EIIC type-1 domain.

The protein resides in the cell inner membrane. The catalysed reaction is N(pros)-phospho-L-histidyl-[protein](out) + sucrose = sucrose 6(G)-phosphate(in) + L-histidyl-[protein]. Functionally, the phosphoenolpyruvate-dependent sugar phosphotransferase system (sugar PTS), a major carbohydrate active transport system, catalyzes the phosphorylation of incoming sugar substrates concomitantly with their translocation across the cell membrane. This system is involved in sucrose transport. The protein is PTS system sucrose-specific EIIBC component of Vibrio alginolyticus.